Reading from the N-terminus, the 256-residue chain is Thiazole synthase (256 aa).

K95 functions as the Schiff-base intermediate with DXP in the catalytic mechanism. 1-deoxy-D-xylulose 5-phosphate is bound by residues G156, 182 to 183 (AG), and 204 to 205 (NT).

Belongs to the ThiG family. As to quaternary structure, homotetramer. Forms heterodimers with either ThiH or ThiS.

The protein localises to the cytoplasm. It catalyses the reaction [ThiS sulfur-carrier protein]-C-terminal-Gly-aminoethanethioate + 2-iminoacetate + 1-deoxy-D-xylulose 5-phosphate = [ThiS sulfur-carrier protein]-C-terminal Gly-Gly + 2-[(2R,5Z)-2-carboxy-4-methylthiazol-5(2H)-ylidene]ethyl phosphate + 2 H2O + H(+). It functions in the pathway cofactor biosynthesis; thiamine diphosphate biosynthesis. Its function is as follows. Catalyzes the rearrangement of 1-deoxy-D-xylulose 5-phosphate (DXP) to produce the thiazole phosphate moiety of thiamine. Sulfur is provided by the thiocarboxylate moiety of the carrier protein ThiS. In vitro, sulfur can be provided by H(2)S. This is Thiazole synthase from Salmonella typhi.